A 294-amino-acid chain; its full sequence is 33 kDa chaperonin (294 aa).

Cystine bridges form between Cys-239/Cys-241 and Cys-272/Cys-275.

It belongs to the HSP33 family. Under oxidizing conditions two disulfide bonds are formed involving the reactive cysteines. Under reducing conditions zinc is bound to the reactive cysteines and the protein is inactive.

The protein localises to the cytoplasm. Its function is as follows. Redox regulated molecular chaperone. Protects both thermally unfolding and oxidatively damaged proteins from irreversible aggregation. Plays an important role in the bacterial defense system toward oxidative stress. This Listeria monocytogenes serotype 4b (strain CLIP80459) protein is 33 kDa chaperonin.